A 401-amino-acid chain; its full sequence is Argininosuccinate synthase (401 aa).

A8–S16 is a binding site for ATP. Y85 serves as a coordination point for L-citrulline. Position 115 (G115) interacts with ATP. Residues T117, N121, and D122 each contribute to the L-aspartate site. L-citrulline is bound at residue N121. The L-citrulline site is built by R125, S173, E258, and Y270.

Belongs to the argininosuccinate synthase family. Type 1 subfamily. In terms of assembly, homotetramer.

Its subcellular location is the cytoplasm. The enzyme catalyses L-citrulline + L-aspartate + ATP = 2-(N(omega)-L-arginino)succinate + AMP + diphosphate + H(+). Its pathway is amino-acid biosynthesis; L-arginine biosynthesis; L-arginine from L-ornithine and carbamoyl phosphate: step 2/3. This Staphylococcus aureus (strain MSSA476) protein is Argininosuccinate synthase.